The chain runs to 115 residues: Large ribosomal subunit protein bL19 (115 aa).

This sequence belongs to the bacterial ribosomal protein bL19 family.

In terms of biological role, this protein is located at the 30S-50S ribosomal subunit interface and may play a role in the structure and function of the aminoacyl-tRNA binding site. The polypeptide is Large ribosomal subunit protein bL19 (rplS) (Buchnera aphidicola subsp. Acyrthosiphon pisum (strain APS) (Acyrthosiphon pisum symbiotic bacterium)).